A 351-amino-acid chain; its full sequence is Anthranilate phosphoribosyltransferase (351 aa).

Residues glycine 90, 93-94 (GD), threonine 98, 100-103 (NIST), 118-126 (KHGNRSASG), and serine 130 contribute to the 5-phospho-alpha-D-ribose 1-diphosphate site. Glycine 90 contacts anthranilate. Serine 102 contributes to the Mg(2+) binding site. Asparagine 121 is an anthranilate binding site. Arginine 176 contributes to the anthranilate binding site. Residues aspartate 235 and glutamate 236 each coordinate Mg(2+).

The protein belongs to the anthranilate phosphoribosyltransferase family. Homodimer. Requires Mg(2+) as cofactor.

It carries out the reaction N-(5-phospho-beta-D-ribosyl)anthranilate + diphosphate = 5-phospho-alpha-D-ribose 1-diphosphate + anthranilate. Its pathway is amino-acid biosynthesis; L-tryptophan biosynthesis; L-tryptophan from chorismate: step 2/5. Functionally, catalyzes the transfer of the phosphoribosyl group of 5-phosphorylribose-1-pyrophosphate (PRPP) to anthranilate to yield N-(5'-phosphoribosyl)-anthranilate (PRA). The sequence is that of Anthranilate phosphoribosyltransferase from Prochlorococcus marinus (strain MIT 9313).